The following is a 260-amino-acid chain: Triosephosphate isomerase (260 aa).

A substrate-binding site is contributed by 11–13 (NWK). The active-site Electrophile is H103. E175 acts as the Proton acceptor in catalysis. Residues G181, S220, and 241 to 242 (GG) contribute to the substrate site.

The protein belongs to the triosephosphate isomerase family. In terms of assembly, homodimer.

It is found in the cytoplasm. It catalyses the reaction D-glyceraldehyde 3-phosphate = dihydroxyacetone phosphate. Its pathway is carbohydrate biosynthesis; gluconeogenesis. The protein operates within carbohydrate degradation; glycolysis; D-glyceraldehyde 3-phosphate from glycerone phosphate: step 1/1. In terms of biological role, involved in the gluconeogenesis. Catalyzes stereospecifically the conversion of dihydroxyacetone phosphate (DHAP) to D-glyceraldehyde-3-phosphate (G3P). In Shewanella halifaxensis (strain HAW-EB4), this protein is Triosephosphate isomerase.